The sequence spans 166 residues: Small ribosomal subunit protein uS5 (166 aa).

The S5 DRBM domain occupies tyrosine 12 to valine 75.

Belongs to the universal ribosomal protein uS5 family. In terms of assembly, part of the 30S ribosomal subunit. Contacts proteins S4 and S8.

Functionally, with S4 and S12 plays an important role in translational accuracy. In terms of biological role, located at the back of the 30S subunit body where it stabilizes the conformation of the head with respect to the body. The chain is Small ribosomal subunit protein uS5 from Pseudomonas savastanoi pv. phaseolicola (strain 1448A / Race 6) (Pseudomonas syringae pv. phaseolicola (strain 1448A / Race 6)).